Reading from the N-terminus, the 442-residue chain is D-inositol 3-phosphate glycosyltransferase (442 aa).

Position 26 (H26) interacts with 1D-myo-inositol 3-phosphate. Residues 32-33 (QP) and G40 each bind UDP-N-acetyl-alpha-D-glucosamine. Residues 37-42 (DAGGMN), K95, Y128, T152, and R172 each bind 1D-myo-inositol 3-phosphate. Residues R246, K251, and Q304 each contribute to the UDP-N-acetyl-alpha-D-glucosamine site. Residues Y313, R314, and A316 each contribute to the Mg(2+) site. UDP-N-acetyl-alpha-D-glucosamine-binding residues include E326 and E334. T340 contacts Mg(2+).

The protein belongs to the glycosyltransferase group 1 family. MshA subfamily. In terms of assembly, homodimer.

It catalyses the reaction 1D-myo-inositol 3-phosphate + UDP-N-acetyl-alpha-D-glucosamine = 1D-myo-inositol 2-acetamido-2-deoxy-alpha-D-glucopyranoside 3-phosphate + UDP + H(+). Catalyzes the transfer of a N-acetyl-glucosamine moiety to 1D-myo-inositol 3-phosphate to produce 1D-myo-inositol 2-acetamido-2-deoxy-glucopyranoside 3-phosphate in the mycothiol biosynthesis pathway. This chain is D-inositol 3-phosphate glycosyltransferase, found in Mycolicibacterium gilvum (strain PYR-GCK) (Mycobacterium gilvum (strain PYR-GCK)).